A 175-amino-acid chain; its full sequence is tRNA (cytidine(56)-2'-O)-methyltransferase (175 aa).

Position 83 (leucine 83) interacts with S-adenosyl-L-methionine.

Belongs to the aTrm56 family. Homodimer.

The protein localises to the cytoplasm. The enzyme catalyses cytidine(56) in tRNA + S-adenosyl-L-methionine = 2'-O-methylcytidine(56) in tRNA + S-adenosyl-L-homocysteine + H(+). Specifically catalyzes the AdoMet-dependent 2'-O-ribose methylation of cytidine at position 56 in tRNAs. The protein is tRNA (cytidine(56)-2'-O)-methyltransferase of Methanosphaera stadtmanae (strain ATCC 43021 / DSM 3091 / JCM 11832 / MCB-3).